The sequence spans 574 residues: Proline--tRNA ligase (574 aa).

Belongs to the class-II aminoacyl-tRNA synthetase family. ProS type 1 subfamily. In terms of assembly, homodimer.

It is found in the cytoplasm. The enzyme catalyses tRNA(Pro) + L-proline + ATP = L-prolyl-tRNA(Pro) + AMP + diphosphate. Catalyzes the attachment of proline to tRNA(Pro) in a two-step reaction: proline is first activated by ATP to form Pro-AMP and then transferred to the acceptor end of tRNA(Pro). As ProRS can inadvertently accommodate and process non-cognate amino acids such as alanine and cysteine, to avoid such errors it has two additional distinct editing activities against alanine. One activity is designated as 'pretransfer' editing and involves the tRNA(Pro)-independent hydrolysis of activated Ala-AMP. The other activity is designated 'posttransfer' editing and involves deacylation of mischarged Ala-tRNA(Pro). The misacylated Cys-tRNA(Pro) is not edited by ProRS. In Oleidesulfovibrio alaskensis (strain ATCC BAA-1058 / DSM 17464 / G20) (Desulfovibrio alaskensis), this protein is Proline--tRNA ligase.